The primary structure comprises 204 residues: FMN-dependent NADH:quinone oxidoreductase (204 aa).

FMN is bound by residues serine 9, 15–17 (SVS), 95–98 (MYNF), and 139–142 (SRGG).

It belongs to the azoreductase type 1 family. In terms of assembly, homodimer. The cofactor is FMN.

The enzyme catalyses 2 a quinone + NADH + H(+) = 2 a 1,4-benzosemiquinone + NAD(+). It catalyses the reaction N,N-dimethyl-1,4-phenylenediamine + anthranilate + 2 NAD(+) = 2-(4-dimethylaminophenyl)diazenylbenzoate + 2 NADH + 2 H(+). In terms of biological role, quinone reductase that provides resistance to thiol-specific stress caused by electrophilic quinones. Its function is as follows. Also exhibits azoreductase activity. Catalyzes the reductive cleavage of the azo bond in aromatic azo compounds to the corresponding amines. This chain is FMN-dependent NADH:quinone oxidoreductase, found in Methylocella silvestris (strain DSM 15510 / CIP 108128 / LMG 27833 / NCIMB 13906 / BL2).